Here is a 425-residue protein sequence, read N- to C-terminus: Protein-glutamate methylesterase/protein-glutamine glutaminase (425 aa).

The 119-residue stretch at R22–H140 folds into the Response regulatory domain. D73 carries the post-translational modification 4-aspartylphosphate. Disordered stretches follow at residues A150 to S174 and V203 to P223. Positions P221 to V417 constitute a CheB-type methylesterase domain. Catalysis depends on residues S241, H269, and D365.

This sequence belongs to the CheB family. Post-translationally, phosphorylated by CheA. Phosphorylation of the N-terminal regulatory domain activates the methylesterase activity.

The protein resides in the cytoplasm. It catalyses the reaction [protein]-L-glutamate 5-O-methyl ester + H2O = L-glutamyl-[protein] + methanol + H(+). It carries out the reaction L-glutaminyl-[protein] + H2O = L-glutamyl-[protein] + NH4(+). Involved in chemotaxis. Part of a chemotaxis signal transduction system that modulates chemotaxis in response to various stimuli. Catalyzes the demethylation of specific methylglutamate residues introduced into the chemoreceptors (methyl-accepting chemotaxis proteins or MCP) by CheR. Also mediates the irreversible deamidation of specific glutamine residues to glutamic acid. The polypeptide is Protein-glutamate methylesterase/protein-glutamine glutaminase (Nitrobacter winogradskyi (strain ATCC 25391 / DSM 10237 / CIP 104748 / NCIMB 11846 / Nb-255)).